A 713-amino-acid polypeptide reads, in one-letter code: uncharacterized protein (713 aa).

The chain crosses the membrane as a helical span at residues 686–706; sequence VWKFNPALYSTITNIFLLIIF.

The protein belongs to the plectrovirus ORF1 family.

Its subcellular location is the host membrane. This is an uncharacterized protein from Spiroplasma melliferum (SpV1).